Reading from the N-terminus, the 681-residue chain is Type VI secretion system spike protein VgrG2 (681 aa).

The segment at 284 to 309 is disordered; it reads AVAGSGKSNSSALQPGQTFSLTEHPN. Polar residues predominate over residues 289–309; that stretch reads GKSNSSALQPGQTFSLTEHPN.

It belongs to the VgrG protein family.

Part of the type VI secretion system specialized secretion system, which delivers several virulence factors in both prokaryotic and eukaryotic cells during infection. Plays an essential role in bacterial mobility and biofilm formation. This chain is Type VI secretion system spike protein VgrG2, found in Aeromonas hydrophila.